Consider the following 416-residue polypeptide: Transmembrane protease serine 11B (416 aa).

The Cytoplasmic segment spans residues 1–17 (MYRHGISSQRSWPLWTT). A helical; Signal-anchor for type II membrane protein membrane pass occupies residues 18–38 (IFIFLGVAAILGVTIGLLVHF). The Extracellular portion of the chain corresponds to 39 to 416 (LAVEKTYYYQ…RNWITSKTGL (378 aa)). The region spanning 43–160 (KTYYYQGDFH…ASIKLMEISK (118 aa)) is the SEA domain. Asn-72 and Asn-107 each carry an N-linked (GlcNAc...) asparagine glycan. The Peptidase S1 domain maps to 185–415 (IVNGKSSLEG…YRNWITSKTG (231 aa)). Cys-210 and Cys-226 are oxidised to a cystine. Catalysis depends on charge relay system residues His-225 and Asp-270. N-linked (GlcNAc...) asparagine glycosylation is present at Asn-315. 2 disulfides stabilise this stretch: Cys-335-Cys-351 and Cys-362-Cys-391. The active-site Charge relay system is the Ser-366.

The protein belongs to the peptidase S1 family.

Its subcellular location is the cell membrane. Inhibited by aprotinin, leupeptin, benzamidine, SERPINA1, SPINT1 and SPINT2. Serine protease. The polypeptide is Transmembrane protease serine 11B (TMPRSS11B) (Homo sapiens (Human)).